A 692-amino-acid chain; its full sequence is Aspartate--tRNA ligase, mitochondrial (692 aa).

The N-terminal 61 residues, 1–61 (MNRVILKDSK…RNFTNTINNN (61 aa)), are a transit peptide targeting the mitochondrion. Glu-264 contributes to the L-aspartate binding site. The aspartate stretch occupies residues 287-290 (QQYK). Arg-309 provides a ligand contact to L-aspartate. ATP contacts are provided by residues 309–311 (RDE) and Glu-590. Arg-597 is an L-aspartate binding site. Residue 642–645 (GFDR) coordinates ATP.

It belongs to the class-II aminoacyl-tRNA synthetase family. Type 1 subfamily.

The protein localises to the mitochondrion matrix. It catalyses the reaction tRNA(Asp) + L-aspartate + ATP = L-aspartyl-tRNA(Asp) + AMP + diphosphate. This Dictyostelium discoideum (Social amoeba) protein is Aspartate--tRNA ligase, mitochondrial (maspS).